Consider the following 287-residue polypeptide: Nucleotide-binding protein Dtpsy_0831 (287 aa).

10-17 (GMSGSGKS) provides a ligand contact to ATP. 59–62 (DVRS) serves as a coordination point for GTP.

It belongs to the RapZ-like family.

In terms of biological role, displays ATPase and GTPase activities. The sequence is that of Nucleotide-binding protein Dtpsy_0831 from Acidovorax ebreus (strain TPSY) (Diaphorobacter sp. (strain TPSY)).